Reading from the N-terminus, the 104-residue chain is Ig lambda-2 chain C region (104 aa).

The 94-residue stretch at 6 to 99 (PTLTVFPPST…EGNTVEKSLS (94 aa)) folds into the Ig-like domain. The cysteines at positions 27 and 85 are disulfide-linked.

The polypeptide is Ig lambda-2 chain C region (Rattus norvegicus (Rat)).